We begin with the raw amino-acid sequence, 877 residues long: DNA polymerase I (877 aa).

The 94-residue stretch at 177-270 folds into the 5'-3' exonuclease domain; it reads TPAQFIDLKA…LEDLVYSGPD (94 aa). Residues 302–465 enclose the 3'-5' exonuclease domain; the sequence is DFTIVDQISQ…TEPILLEKLS (164 aa).

This sequence belongs to the DNA polymerase type-A family. As to quaternary structure, single-chain monomer with multiple functions.

It catalyses the reaction DNA(n) + a 2'-deoxyribonucleoside 5'-triphosphate = DNA(n+1) + diphosphate. In terms of biological role, in addition to polymerase activity, this DNA polymerase exhibits 3'-5' and 5'-3' exonuclease activity. In Streptococcus pneumoniae (strain ATCC BAA-255 / R6), this protein is DNA polymerase I (polA).